Consider the following 433-residue polypeptide: Signal recognition particle 54 kDa protein (433 aa).

GTP is bound by residues 106 to 113, 186 to 190, and 244 to 247; these read GVEGSGKT, DTAGR, and TKMD.

The protein belongs to the GTP-binding SRP family. SRP54 subfamily. As to quaternary structure, part of the signal recognition particle protein translocation system, which is composed of SRP and FtsY. Archaeal SRP consists of a 7S RNA molecule of 300 nucleotides and two protein subunits: SRP54 and SRP19.

It is found in the cytoplasm. The enzyme catalyses GTP + H2O = GDP + phosphate + H(+). Involved in targeting and insertion of nascent membrane proteins into the cytoplasmic membrane. Binds to the hydrophobic signal sequence of the ribosome-nascent chain (RNC) as it emerges from the ribosomes. The SRP-RNC complex is then targeted to the cytoplasmic membrane where it interacts with the SRP receptor FtsY. This Pyrobaculum islandicum (strain DSM 4184 / JCM 9189 / GEO3) protein is Signal recognition particle 54 kDa protein.